The sequence spans 259 residues: Type III pantothenate kinase (259 aa).

6–13 (DAGNTNIV) provides a ligand contact to ATP. Residues Y100 and 107–110 (GADR) each bind substrate. D109 serves as the catalytic Proton acceptor. D129 contacts K(+). T132 lines the ATP pocket. Residue T184 coordinates substrate.

It belongs to the type III pantothenate kinase family. Homodimer. The cofactor is NH4(+). It depends on K(+) as a cofactor.

It is found in the cytoplasm. It carries out the reaction (R)-pantothenate + ATP = (R)-4'-phosphopantothenate + ADP + H(+). The protein operates within cofactor biosynthesis; coenzyme A biosynthesis; CoA from (R)-pantothenate: step 1/5. In terms of biological role, catalyzes the phosphorylation of pantothenate (Pan), the first step in CoA biosynthesis. This is Type III pantothenate kinase from Clostridium novyi (strain NT).